Reading from the N-terminus, the 159-residue chain is Phosphopantetheine adenylyltransferase (159 aa).

Ser9 is a substrate binding site. ATP is bound by residues 9–10 (SF) and His17. Residues Lys41, Leu74, and Lys88 each contribute to the substrate site. ATP is bound by residues 89 to 91 (GLR), Glu99, and 123 to 129 (YGYISST).

The protein belongs to the bacterial CoaD family. Homohexamer. It depends on Mg(2+) as a cofactor.

The protein localises to the cytoplasm. It catalyses the reaction (R)-4'-phosphopantetheine + ATP + H(+) = 3'-dephospho-CoA + diphosphate. Its pathway is cofactor biosynthesis; coenzyme A biosynthesis; CoA from (R)-pantothenate: step 4/5. Its function is as follows. Reversibly transfers an adenylyl group from ATP to 4'-phosphopantetheine, yielding dephospho-CoA (dPCoA) and pyrophosphate. This Corynebacterium diphtheriae (strain ATCC 700971 / NCTC 13129 / Biotype gravis) protein is Phosphopantetheine adenylyltransferase.